The primary structure comprises 363 residues: p21-activated protein kinase-interacting protein 1-like (363 aa).

5 WD repeats span residues 38 to 75 (AHTA…EHGA), 78 to 116 (HHNG…CQQT), 119 to 158 (AHKG…SAFI), 200 to 238 (NNPK…CVCE), and 241 to 282 (AHEN…VQTS). Residues 309–363 (KEKSNTAVTASAVKDCDRPKKKKAQNETTDKEASETQVVHKKRKPETKQKKKKPS) are disordered. Residues 322 to 342 (KDCDRPKKKKAQNETTDKEAS) show a composition bias toward basic and acidic residues. A compositionally biased stretch (basic residues) spans 347-363 (VHKKRKPETKQKKKKPS).

It localises to the nucleus. The protein resides in the nucleolus. In terms of biological role, negatively regulates the PAK1 kinase. PAK1 is a member of the PAK kinase family, which has been shown to play a positive role in the regulation of signaling pathways involving MAPK8 and RELA. PAK1 exists as an inactive homodimer, which is activated by binding of small GTPases such as CDC42 to an N-terminal regulatory domain. PAK1IP1 also binds to the N-terminus of PAK1, and inhibits the specific activation of PAK1 by CDC42. May be involved in ribosomal large subunit assembly. This is p21-activated protein kinase-interacting protein 1-like (pak1ip1) from Xenopus laevis (African clawed frog).